The following is a 76-amino-acid chain: Toxin Acra III-2 (76 aa).

The LCN-type CS-alpha/beta domain maps to 3-67; that stretch reads VPGNYPLNTY…IWDAVKNHCT (65 aa). Disulfide bonds link C18–C41, C27–C46, and C31–C48.

This sequence belongs to the long (3 C-C) scorpion toxin superfamily. Sodium channel inhibitor family. Beta subfamily. In terms of tissue distribution, expressed by the venom gland.

Its subcellular location is the secreted. Functionally, binds to sodium channels (Nav) and affects the channel activation process. In Androctonus crassicauda (Arabian fat-tailed scorpion), this protein is Toxin Acra III-2.